The following is a 992-amino-acid chain: UvrABC system protein A (992 aa).

Residues 1–11 are compositionally biased toward polar residues; that stretch reads MPKNSSTTVSS. Residues 1–30 are disordered; the sequence is MPKNSSTTVSSAVEAHAGGLASGPGGARSG. 62–69 is a binding site for ATP; sequence GLSGSGKS. The C4-type; atypical zinc finger occupies 302–330; the sequence is CPNGHEQTVDEIEPRSFSFNNPFGACPEC. ABC transporter domains lie at 360 to 639 and 659 to 988; these read WSLG…TRSV and PEKG…RFLA. 692–699 is a binding site for ATP; the sequence is GVSGSGKS. Residues 791-817 form a C4-type zinc finger; the sequence is CEACAGDGTLKIEMNFLPDVYVPCEVC.

It belongs to the ABC transporter superfamily. UvrA family. In terms of assembly, forms a heterotetramer with UvrB during the search for lesions.

Its subcellular location is the cytoplasm. Functionally, the UvrABC repair system catalyzes the recognition and processing of DNA lesions. UvrA is an ATPase and a DNA-binding protein. A damage recognition complex composed of 2 UvrA and 2 UvrB subunits scans DNA for abnormalities. When the presence of a lesion has been verified by UvrB, the UvrA molecules dissociate. The chain is UvrABC system protein A from Micrococcus luteus (Micrococcus lysodeikticus).